A 488-amino-acid polypeptide reads, in one-letter code: ATP synthase subunit beta (488 aa).

Residue 164 to 171 coordinates ATP; it reads GGAGVGKT.

This sequence belongs to the ATPase alpha/beta chains family. In terms of assembly, F-type ATPases have 2 components, CF(1) - the catalytic core - and CF(0) - the membrane proton channel. CF(1) has five subunits: alpha(3), beta(3), gamma(1), delta(1), epsilon(1). CF(0) has four main subunits: a(1), b(1), b'(1) and c(9-12).

It localises to the cellular thylakoid membrane. It catalyses the reaction ATP + H2O + 4 H(+)(in) = ADP + phosphate + 5 H(+)(out). In terms of biological role, produces ATP from ADP in the presence of a proton gradient across the membrane. The catalytic sites are hosted primarily by the beta subunits. The sequence is that of ATP synthase subunit beta from Prochlorococcus marinus (strain SARG / CCMP1375 / SS120).